A 443-amino-acid polypeptide reads, in one-letter code: Thymidine phosphorylase (443 aa).

Belongs to the thymidine/pyrimidine-nucleoside phosphorylase family. As to quaternary structure, homodimer.

It catalyses the reaction thymidine + phosphate = 2-deoxy-alpha-D-ribose 1-phosphate + thymine. It functions in the pathway pyrimidine metabolism; dTMP biosynthesis via salvage pathway; dTMP from thymine: step 1/2. In terms of biological role, the enzymes which catalyze the reversible phosphorolysis of pyrimidine nucleosides are involved in the degradation of these compounds and in their utilization as carbon and energy sources, or in the rescue of pyrimidine bases for nucleotide synthesis. This chain is Thymidine phosphorylase, found in Photobacterium profundum (strain SS9).